The chain runs to 348 residues: Fe-S cluster assembly protein DRE2 (348 aa).

Positions 1–158 are N-terminal SAM-like domain; sequence MSQYKTGLLL…LPTFKKASSS (158 aa). Residues 137 to 170 form a disordered region; that stretch reads KTNNTKLQSGSKLPTFKKASSSTSNLPSFKKADH. Residues 144-163 are compositionally biased toward polar residues; the sequence is QSGSKLPTFKKASSSTSNLP. A linker region spans residues 159–242; it reads TSNLPSFKKA…EEELIDEDGS (84 aa). The residue at position 206 (Ser-206) is a Phosphoserine. The [2Fe-2S] cluster site is built by Cys-252, Cys-263, Cys-266, and Cys-268. A fe-S binding site A region spans residues 252–268; sequence CGKSKTKKKKACKDCTC. The [4Fe-4S] cluster site is built by Cys-311, Cys-314, Cys-322, and Cys-325. 2 consecutive short sequence motifs (cx2C motif) follow at residues 311 to 314 and 322 to 325; these read CGSC and CSGC. The interval 311 to 325 is fe-S binding site B; that stretch reads CGSCSLGDAFRCSGC.

It belongs to the anamorsin family. As to quaternary structure, monomer. Interacts with TAH18. Interacts with MIA40. Requires [2Fe-2S] cluster as cofactor. The cofactor is [4Fe-4S] cluster. Ubiquitinated.

It is found in the cytoplasm. The protein resides in the mitochondrion intermembrane space. Functionally, component of the cytosolic iron-sulfur (Fe-S) protein assembly (CIA) machinery required for the maturation of extramitochondrial Fe-S proteins. Part of an electron transfer chain functioning in an early step of cytosolic Fe-S biogenesis, facilitating the de novo assembly of a [4Fe-4S] cluster on the scaffold complex CFD1-NBP35. Electrons are transferred to DRE2 from NADPH via the FAD- and FMN-containing protein TAH18. TAH18-DRE2 are also required for the assembly of the diferric tyrosyl radical cofactor of ribonucleotide reductase (RNR), probably by providing electrons for reduction during radical cofactor maturation in the catalytic small subunit RNR2. Has anti-apoptotic effects in the cell. Involved in negative control of H(2)O(2)-induced cell death. In Saccharomyces cerevisiae (strain ATCC 204508 / S288c) (Baker's yeast), this protein is Fe-S cluster assembly protein DRE2.